The sequence spans 1241 residues: ATP-dependent helicase/nuclease subunit A (1241 aa).

Residues Ser12 to Arg485 form the UvrD-like helicase ATP-binding domain. Ala33–Thr40 contacts ATP. The 301-residue stretch at Gly505–Gly805 folds into the UvrD-like helicase C-terminal domain.

The protein belongs to the helicase family. AddA subfamily. Heterodimer of AddA and AddB/RexB. The cofactor is Mg(2+).

The catalysed reaction is Couples ATP hydrolysis with the unwinding of duplex DNA by translocating in the 3'-5' direction.. It catalyses the reaction ATP + H2O = ADP + phosphate + H(+). Its function is as follows. The heterodimer acts as both an ATP-dependent DNA helicase and an ATP-dependent, dual-direction single-stranded exonuclease. Recognizes the chi site generating a DNA molecule suitable for the initiation of homologous recombination. The AddA nuclease domain is required for chi fragment generation; this subunit has the helicase and 3' -&gt; 5' nuclease activities. This is ATP-dependent helicase/nuclease subunit A from Bacillus cereus (strain Q1).